Here is a 379-residue protein sequence, read N- to C-terminus: Putative acetyl-CoA C-acetyltransferase VraB (379 aa).

The active-site Acyl-thioester intermediate is the cysteine 86. Histidine 338 functions as the Proton acceptor in the catalytic mechanism.

The protein belongs to the thiolase-like superfamily. Thiolase family.

This is Putative acetyl-CoA C-acetyltransferase VraB (vraB) from Staphylococcus aureus (strain Mu3 / ATCC 700698).